The chain runs to 152 residues: Lipoprotein signal peptidase (152 aa).

The next 2 helical transmembrane spans lie at 55-75 and 85-105; these read NKMWFFYIITVVFVGFIVFYM and LGISLGLILGGAIGNFIDRVF. Residues Asp-111 and Asp-129 contribute to the active site. Residues 124–144 form a helical membrane-spanning segment; that stretch reads VFNIADSALCIGVVLIIIQTL.

Belongs to the peptidase A8 family.

It localises to the cell membrane. It carries out the reaction Release of signal peptides from bacterial membrane prolipoproteins. Hydrolyzes -Xaa-Yaa-Zaa-|-(S,diacylglyceryl)Cys-, in which Xaa is hydrophobic (preferably Leu), and Yaa (Ala or Ser) and Zaa (Gly or Ala) have small, neutral side chains.. It participates in protein modification; lipoprotein biosynthesis (signal peptide cleavage). This protein specifically catalyzes the removal of signal peptides from prolipoproteins. In Bacillus cytotoxicus (strain DSM 22905 / CIP 110041 / 391-98 / NVH 391-98), this protein is Lipoprotein signal peptidase.